The primary structure comprises 246 residues: MAEPESLLEQLRGHFGGRLTDCWLERGEVTADVRPADLLAVMTELRDGAEWRFEQLSDVAGVDYAAYGQDEWITESATGTGFSRGVTEPGFGRLGLTGIYGVQSIEEQTGRRFAAVYQLLSLTHNHRLRVRCFAEDDDLPVLPSVTGIWPCANWAEREAFDLYGIVFEGHPDLRRILTDYGFVGHPFRKDFPLIGNVEPRYDPEKGRVVYGPVEIEPRVLVPRVIREDNRYAAPQKAEGTEGQADG.

This sequence belongs to the complex I 30 kDa subunit family. NDH-1 is composed of 14 different subunits. Subunits NuoB, C, D, E, F, and G constitute the peripheral sector of the complex.

It is found in the cell inner membrane. The enzyme catalyses a quinone + NADH + 5 H(+)(in) = a quinol + NAD(+) + 4 H(+)(out). Functionally, NDH-1 shuttles electrons from NADH, via FMN and iron-sulfur (Fe-S) centers, to quinones in the respiratory chain. The immediate electron acceptor for the enzyme in this species is believed to be ubiquinone. Couples the redox reaction to proton translocation (for every two electrons transferred, four hydrogen ions are translocated across the cytoplasmic membrane), and thus conserves the redox energy in a proton gradient. This chain is NADH-quinone oxidoreductase subunit C, found in Halorhodospira halophila (strain DSM 244 / SL1) (Ectothiorhodospira halophila (strain DSM 244 / SL1)).